The primary structure comprises 642 residues: Rhotekin-2 (642 aa).

Residues 30-105 enclose the REM-1 domain; sequence IKRKKIRESM…AQKRTGHQDF (76 aa). The PH domain occupies 306–413; sequence LDMMSGFLSQ…WLDSLWQHIY (108 aa). 2 disordered regions span residues 505-563 and 575-642; these read TVLS…GRPS and LQKS…PKAW. Basic and acidic residues-rich tracts occupy residues 597-615 and 632-642; these read PEKR…KEYI and SFREKMNPKAW.

The sequence is that of Rhotekin-2 (rtkn2) from Danio rerio (Zebrafish).